The chain runs to 274 residues: Diaminopimelate epimerase (274 aa).

Positions 11, 44, and 64 each coordinate substrate. Catalysis depends on Cys-73, which acts as the Proton donor. Residues 74 to 75 (GN), Asn-157, Asn-190, and 208 to 209 (ER) each bind substrate. Catalysis depends on Cys-217, which acts as the Proton acceptor. Substrate is bound at residue 218-219 (GS).

It belongs to the diaminopimelate epimerase family. As to quaternary structure, homodimer.

Its subcellular location is the cytoplasm. The enzyme catalyses (2S,6S)-2,6-diaminopimelate = meso-2,6-diaminopimelate. It functions in the pathway amino-acid biosynthesis; L-lysine biosynthesis via DAP pathway; DL-2,6-diaminopimelate from LL-2,6-diaminopimelate: step 1/1. Its function is as follows. Catalyzes the stereoinversion of LL-2,6-diaminopimelate (L,L-DAP) to meso-diaminopimelate (meso-DAP), a precursor of L-lysine and an essential component of the bacterial peptidoglycan. This is Diaminopimelate epimerase from Pectobacterium atrosepticum (strain SCRI 1043 / ATCC BAA-672) (Erwinia carotovora subsp. atroseptica).